Reading from the N-terminus, the 333-residue chain is Protein-methionine-sulfoxide reductase catalytic subunit MsrP (333 aa).

The tat-type signal signal peptide spans 1–43; sequence MSKQRKLTEADVTPESVFYQRRKVLQALGITAASLALPHNAQA. Residues Asn-87, 90-91, Cys-145, Thr-180, Asn-232, Arg-237, and 248-250 contribute to the Mo-molybdopterin site; these read YE and GIK.

The protein belongs to the MsrP family. Heterodimer of a catalytic subunit (MsrP) and a heme-binding subunit (MsrQ). Requires Mo-molybdopterin as cofactor. Post-translationally, predicted to be exported by the Tat system. The position of the signal peptide cleavage has not been experimentally proven.

It localises to the periplasm. It catalyses the reaction L-methionyl-[protein] + a quinone + H2O = L-methionyl-(S)-S-oxide-[protein] + a quinol. The catalysed reaction is L-methionyl-[protein] + a quinone + H2O = L-methionyl-(R)-S-oxide-[protein] + a quinol. In terms of biological role, part of the MsrPQ system that repairs oxidized periplasmic proteins containing methionine sulfoxide residues (Met-O), using respiratory chain electrons. Thus protects these proteins from oxidative-stress damage caused by reactive species of oxygen and chlorine generated by the host defense mechanisms. MsrPQ is essential for the maintenance of envelope integrity under bleach stress, rescuing a wide series of structurally unrelated periplasmic proteins from methionine oxidation. The catalytic subunit MsrP is non-stereospecific, being able to reduce both (R-) and (S-) diastereoisomers of methionine sulfoxide. This Serratia proteamaculans (strain 568) protein is Protein-methionine-sulfoxide reductase catalytic subunit MsrP.